We begin with the raw amino-acid sequence, 172 residues long: MSDQQNTQQDDQPFFNIQRVYLKDMSLEQPNSPAIFLESEAPSVEVQVNVGASQLQEGIFEVVVTGTVTTKVQDKVAFLVEAHQAGIFDIRNVPVEQLDPLLGIACPTILYPYLRGNIADVITRAGFQAIHLSEINFQALYEQRLQAAMEEAQGAEGGNSGIVMPDGSQARH.

The disordered stretch occupies residues 152-172 (AQGAEGGNSGIVMPDGSQARH).

The protein belongs to the SecB family. In terms of assembly, homotetramer, a dimer of dimers. One homotetramer interacts with 1 SecA dimer.

Its subcellular location is the cytoplasm. In terms of biological role, one of the proteins required for the normal export of preproteins out of the cell cytoplasm. It is a molecular chaperone that binds to a subset of precursor proteins, maintaining them in a translocation-competent state. It also specifically binds to its receptor SecA. In Cupriavidus taiwanensis (strain DSM 17343 / BCRC 17206 / CCUG 44338 / CIP 107171 / LMG 19424 / R1) (Ralstonia taiwanensis (strain LMG 19424)), this protein is Protein-export protein SecB.